A 186-amino-acid polypeptide reads, in one-letter code: Guanylate kinase (186 aa).

Residues 5–183 enclose the Guanylate kinase-like domain; sequence GNLTVLTGPS…AFKEIEGFMG (179 aa). 12–19 is an ATP binding site; the sequence is GPSGVGKG.

The protein belongs to the guanylate kinase family.

The protein resides in the cytoplasm. The catalysed reaction is GMP + ATP = GDP + ADP. In terms of biological role, essential for recycling GMP and indirectly, cGMP. The polypeptide is Guanylate kinase (Prochlorococcus marinus (strain NATL2A)).